Reading from the N-terminus, the 553-residue chain is Putative transport protein YidE (553 aa).

The next 5 helical transmembrane spans lie at 4 to 24, 28 to 48, 65 to 85, 95 to 115, and 158 to 178; these read IALT…IGNV, GVGL…HFVS, FGLI…FFAS, LFAV…HKLF, and MSYA…MWML. 2 RCK C-terminal domains span residues 191–276 and 279–361; these read QQHE…VIGQ and DTSL…VLGN. The next 6 membrane-spanning stretches (helical) occupy residues 371-391, 393-413, 439-459, 464-484, 493-513, and 533-553; these read MLPV…PVFV, GFPA…ALIL, IVLF…HTLV, LSWI…VGIL, YLTM…LAFA, and LVMF…WSIG.

This sequence belongs to the AAE transporter (TC 2.A.81) family. YidE subfamily.

Its subcellular location is the cell membrane. The chain is Putative transport protein YidE from Escherichia coli O6:K15:H31 (strain 536 / UPEC).